Here is a 141-residue protein sequence, read N- to C-terminus: Large ribosomal subunit protein uL11 (141 aa).

It belongs to the universal ribosomal protein uL11 family. Part of the ribosomal stalk of the 50S ribosomal subunit. Interacts with L10 and the large rRNA to form the base of the stalk. L10 forms an elongated spine to which L12 dimers bind in a sequential fashion forming a multimeric L10(L12)X complex. In terms of processing, one or more lysine residues are methylated.

Functionally, forms part of the ribosomal stalk which helps the ribosome interact with GTP-bound translation factors. This chain is Large ribosomal subunit protein uL11, found in Lactobacillus delbrueckii subsp. bulgaricus (strain ATCC 11842 / DSM 20081 / BCRC 10696 / JCM 1002 / NBRC 13953 / NCIMB 11778 / NCTC 12712 / WDCM 00102 / Lb 14).